A 159-amino-acid polypeptide reads, in one-letter code: Protein UXT homolog (159 aa).

The protein belongs to the UXT family.

The protein is Protein UXT homolog of Nematostella vectensis (Starlet sea anemone).